The following is a 583-amino-acid chain: J protein JJJ2 (583 aa).

Positions 11-79 constitute a J domain; sequence RTTYYSILGL…KLRYDRDLKI (69 aa). A compositionally biased stretch (polar residues) spans 215 to 224; that stretch reads SYSEDPNSCL. A disordered region spans residues 215–313; sequence SYSEDPNSCL…SGSHDSNLQS (99 aa). Serine 229 is modified (phosphoserine). Over residues 240–252 the composition is skewed to low complexity; the sequence is QQQQQQQQQQQQQ. Basic and acidic residues predominate over residues 262–281; the sequence is SPDEEKKNNKEPKRESRVSP. Polar residues predominate over residues 298–313; the sequence is KTSTFSSGSHDSNLQS.

The protein resides in the cytoplasm. It is found in the nucleus. This is J protein JJJ2 (JJJ2) from Saccharomyces cerevisiae (strain ATCC 204508 / S288c) (Baker's yeast).